Reading from the N-terminus, the 145-residue chain is Superoxide dismutase [Mn/Fe] (145 aa).

His-10 and His-64 together coordinate Fe(3+). Mn(2+)-binding residues include His-10 and His-64.

Belongs to the iron/manganese superoxide dismutase family. It depends on Mn(2+) as a cofactor. Requires Fe(3+) as cofactor.

It catalyses the reaction 2 superoxide + 2 H(+) = H2O2 + O2. In terms of biological role, destroys superoxide anion radicals which are normally produced within the cells and which are toxic to biological systems. Catalyzes the dismutation of superoxide anion radicals into O2 and H2O2 by successive reduction and oxidation of the transition metal ion at the active site. The protein is Superoxide dismutase [Mn/Fe] (sodA) of Streptococcus salivarius.